We begin with the raw amino-acid sequence, 207 residues long: Putative 3-methyladenine DNA glycosylase (207 aa).

The protein belongs to the DNA glycosylase MPG family.

The chain is Putative 3-methyladenine DNA glycosylase from Burkholderia orbicola (strain MC0-3).